Reading from the N-terminus, the 387-residue chain is Ferrochelatase (387 aa).

Fe cation-binding residues include histidine 196 and glutamate 277.

The protein belongs to the ferrochelatase family.

It localises to the cytoplasm. The catalysed reaction is heme b + 2 H(+) = protoporphyrin IX + Fe(2+). It participates in porphyrin-containing compound metabolism; protoheme biosynthesis; protoheme from protoporphyrin-IX: step 1/1. Its function is as follows. Catalyzes the ferrous insertion into protoporphyrin IX. The polypeptide is Ferrochelatase (Synechococcus sp. (strain RCC307)).